Consider the following 333-residue polypeptide: MTTTLLRTADELHARVRHGRRAVVMTMGALHEGHATLIRTAREIAGAEGEVVVTVFVNPLQFGRGEDLDRYPRTLDADLKIAEAAGADVVFAPSADEVYPGGEPQVRISAGPMGERLEGAFRPGHFDGMLTVVGKLLHLTRPDVALYGQKDAQQLALIRRMARDLNFGVEIVGVPTVREDDGLALSSRNRYLAADERRTALALSQALFAGRDRHAAQEALRARAREVPATRARAEALSAIGESRAAADAHAVAKATPAGTSGPAAVRCAARLVLEEAARLQPPLVLDYLGLVDPSDFTEIPDDFTGEAVLAVAARVGTTRLIDNIPLTFGAAS.

Residue 27–34 (MGALHEGH) coordinates ATP. Catalysis depends on histidine 34, which acts as the Proton donor. Glutamine 61 provides a ligand contact to (R)-pantoate. Glutamine 61 provides a ligand contact to beta-alanine. An ATP-binding site is contributed by 148–151 (GQKD). Glutamine 154 contacts (R)-pantoate. Residues valine 177 and 185-188 (LSSR) each bind ATP.

It belongs to the pantothenate synthetase family. As to quaternary structure, homodimer.

It localises to the cytoplasm. It catalyses the reaction (R)-pantoate + beta-alanine + ATP = (R)-pantothenate + AMP + diphosphate + H(+). It functions in the pathway cofactor biosynthesis; (R)-pantothenate biosynthesis; (R)-pantothenate from (R)-pantoate and beta-alanine: step 1/1. Catalyzes the condensation of pantoate with beta-alanine in an ATP-dependent reaction via a pantoyl-adenylate intermediate. This is Pantothenate synthetase from Streptomyces avermitilis (strain ATCC 31267 / DSM 46492 / JCM 5070 / NBRC 14893 / NCIMB 12804 / NRRL 8165 / MA-4680).